Consider the following 181-residue polypeptide: Ribosome maturation factor RimM (181 aa).

The PRC barrel domain occupies 98-177 (EGEFFYCDLV…KITTHNAKTL (80 aa)).

Belongs to the RimM family. In terms of assembly, binds ribosomal protein uS19.

It localises to the cytoplasm. An accessory protein needed during the final step in the assembly of 30S ribosomal subunit, possibly for assembly of the head region. Essential for efficient processing of 16S rRNA. May be needed both before and after RbfA during the maturation of 16S rRNA. It has affinity for free ribosomal 30S subunits but not for 70S ribosomes. This Helicobacter pylori (strain HPAG1) protein is Ribosome maturation factor RimM.